Here is a 688-residue protein sequence, read N- to C-terminus: Glycine--tRNA ligase beta subunit (688 aa).

This sequence belongs to the class-II aminoacyl-tRNA synthetase family. Tetramer of two alpha and two beta subunits.

It localises to the cytoplasm. The enzyme catalyses tRNA(Gly) + glycine + ATP = glycyl-tRNA(Gly) + AMP + diphosphate. This Aliivibrio fischeri (strain ATCC 700601 / ES114) (Vibrio fischeri) protein is Glycine--tRNA ligase beta subunit.